Reading from the N-terminus, the 199-residue chain is Superoxide dismutase [Mn] (199 aa).

Mn(2+)-binding residues include His27, His76, Asp160, and His164.

It belongs to the iron/manganese superoxide dismutase family. The cofactor is Mn(2+).

The enzyme catalyses 2 superoxide + 2 H(+) = H2O2 + O2. Functionally, destroys superoxide anion radicals which are normally produced within the cells and which are toxic to biological systems. The protein is Superoxide dismutase [Mn] (sodA) of Corynebacterium diphtheriae (strain ATCC 700971 / NCTC 13129 / Biotype gravis).